A 653-amino-acid polypeptide reads, in one-letter code: Chromosomal replication initiator protein DnaA (653 aa).

The interval 1 to 100 is domain I, interacts with DnaA modulators; the sequence is MADVPADLAA…SAGEPPASAS (100 aa). Residues 86–310 form a disordered region; that stretch reads ITVDDSAGEP…PAPATGPGEP (225 aa). Residues 101 to 312 are domain II; that stretch reads PAPPRYEEPE…PATGPGEPTA (212 aa). Composition is skewed to basic and acidic residues over residues 120 to 150 and 221 to 267; these read DPYESRGREGYEGYGRHRADDHRQGHNDRHQ and PSYD…RRNI. Low complexity predominate over residues 284–310; that stretch reads GSALPASSGAPGPLAAQPAPATGPGEP. A domain III, AAA+ region region spans residues 313–529; that stretch reads RLNPKYLFDT…GALIRVTAFA (217 aa). Glycine 357, glycine 359, lysine 360, and threonine 361 together coordinate ATP. The tract at residues 530 to 653 is domain IV, binds dsDNA; sequence SLNRQPVDLG…TELTNRIKNG (124 aa).

The protein belongs to the DnaA family. Oligomerizes as a right-handed, spiral filament on DNA at oriC.

The protein localises to the cytoplasm. In terms of biological role, plays an essential role in the initiation and regulation of chromosomal replication. ATP-DnaA binds to the origin of replication (oriC) to initiate formation of the DNA replication initiation complex once per cell cycle. Binds the DnaA box (a 9 base pair repeat at the origin) and separates the double-stranded (ds)DNA. Forms a right-handed helical filament on oriC DNA; dsDNA binds to the exterior of the filament while single-stranded (ss)DNA is stabiized in the filament's interior. The ATP-DnaA-oriC complex binds and stabilizes one strand of the AT-rich DNA unwinding element (DUE), permitting loading of DNA polymerase. After initiation quickly degrades to an ADP-DnaA complex that is not apt for DNA replication. Binds acidic phospholipids. This chain is Chromosomal replication initiator protein DnaA, found in Streptomyces avermitilis (strain ATCC 31267 / DSM 46492 / JCM 5070 / NBRC 14893 / NCIMB 12804 / NRRL 8165 / MA-4680).